A 153-amino-acid chain; its full sequence is Bifunctional protein GAL10 (153 aa).

The tract at residues Met-1–Glu-153 is galactowaldenase.

This sequence in the N-terminal section; belongs to the NAD(P)-dependent epimerase/dehydratase family. It in the C-terminal section; belongs to the aldose epimerase family. Requires NAD(+) as cofactor.

The catalysed reaction is UDP-alpha-D-glucose = UDP-alpha-D-galactose. The enzyme catalyses alpha-D-glucose = beta-D-glucose. It participates in carbohydrate metabolism; galactose metabolism. Its pathway is carbohydrate metabolism; hexose metabolism. Mutarotase converts alpha-aldose to the beta-anomer. It is active on D-glucose, L-arabinose, D-xylose, D-galactose, maltose and lactose. The chain is Bifunctional protein GAL10 (GAL10) from Candida maltosa (Yeast).